The following is a 390-amino-acid chain: 5-hydroxytryptamine receptor 1B (390 aa).

At 1 to 46 (MEEPGAQCAPPLAAGSQIAVPQANLSAAHSHNCSAEGYIYQDSIAL) the chain is on the extracellular side. N-linked (GlcNAc...) asparagine glycosylation is found at Asn24 and Asn32. A helical membrane pass occupies residues 47–72 (PWKVLLVLLLALFTLATTLSNAFVVA). The Cytoplasmic segment spans residues 73–86 (TVYRTRKLHTPANY). Residues 87–111 (LIASLAVTDLLVSILVMPISTMYTV) traverse the membrane as a helical segment. Residues 112–119 (TGRWTLGQ) are Extracellular-facing. Residues 120–145 (VVCDLWLSSDITCCTASIMHLCVIAL) traverse the membrane as a helical segment. A disulfide bridge links Cys122 with Cys199. Residues Asp129 and Thr134 each contribute to the ergotamine site. A DRY motif; important for ligand-induced conformation changes and signaling motif is present at residues 146–148 (DRY). Over 146–165 (DRYWAITDAVEYSAKRTPKR) the chain is Cytoplasmic. Residues 166-184 (AAIMIRLVWVFSICISLPP) traverse the membrane as a helical segment. At 185–205 (FFWRQAKAEEEVSECLVNTDH) the chain is on the extracellular side. Val201 provides a ligand contact to ergotamine. The helical transmembrane segment at 206-229 (VLYTVYSTVGAFYLPTLLLIALYG) threads the bilayer. The Cytoplasmic portion of the chain corresponds to 230 to 315 (RIYVEARSRI…AARERKATKT (86 aa)). The segment covering 260–272 (SPGSTTSVTSINS) has biased composition (polar residues). The interval 260–282 (SPGSTTSVTSINSRAPDVPSESG) is disordered. A helical transmembrane segment spans residues 316–337 (LGIILGVFIVCWLPFFIISLVM). Residues 338–347 (PICKDACWFH) are Extracellular-facing. Residues 348-370 (QAIFDFFTWLGYVNSLINPIIYT) traverse the membrane as a helical segment. The short motif at 365 to 369 (NPIIY) is the NPxxY motif; important for ligand-induced conformation changes and signaling element. The Cytoplasmic portion of the chain corresponds to 371–390 (MSNEDFKQAFHKLIRFKCTS). Residue Cys388 is the site of S-palmitoyl cysteine attachment.

It belongs to the G-protein coupled receptor 1 family. Homodimer. Heterodimer with HTR1D. Post-translationally, phosphorylated. Desensitization of the receptor may be mediated by its phosphorylation. In terms of processing, palmitoylated.

Its subcellular location is the cell membrane. Functionally, G-protein coupled receptor for 5-hydroxytryptamine (serotonin). Also functions as a receptor for ergot alkaloid derivatives, various anxiolytic and antidepressant drugs and other psychoactive substances, such as lysergic acid diethylamide (LSD). Ligand binding causes a conformation change that triggers signaling via guanine nucleotide-binding proteins (G proteins) and modulates the activity of downstream effectors, such as adenylate cyclase. HTR1B is coupled to G(i)/G(o) G alpha proteins and mediates inhibitory neurotransmission by inhibiting adenylate cyclase activity. Arrestin family members inhibit signaling via G proteins and mediate activation of alternative signaling pathways. Regulates the release of 5-hydroxytryptamine, dopamine and acetylcholine in the brain, and thereby affects neural activity, nociceptive processing, pain perception, mood and behavior. Besides, plays a role in vasoconstriction of cerebral arteries. The polypeptide is 5-hydroxytryptamine receptor 1B (HTR1B) (Oryctolagus cuniculus (Rabbit)).